The primary structure comprises 637 residues: MPIEDVLLDLKHKIEKNLPAGVTITDVEFEGPQLVLYTEEPRKFADDGNIIRNLAKELRTRIAMRPDPRVLATPEDSISIIEEVVPKESVISSYYFDPDSGEVIIEAEKPGLVIGKHGATLREITKQIGWIPKVVRTPPIKSRTVKNIREFMRNNLKERKEILKTVGRKIHRECTSKDQWVRVTALGGCKEVGRSCFLLSTPESRILIDCGVNVGSDENMTPYLYVPEVFPLNQIDAVIVTHAHLDHQGLVPLLFKYGYEGPVYCTPPTRDLMVLLQLDYIDVAAKEGKKIPYESGMVAKTLKHTIPLDYEEVTDIAPDIKLTFHNAGHILGSAISHFHIGDGLHNVVFTGDYKYEKTRLFDPAVNKFPRVETVISEATYGNANAFQPALKDAEKHLQMVVKNTIERGGIAVIPAFAVGRSQEVMIVLEESIRKGLIPEVPVYLDGMIWEATAIHATHPEYLNNDLRKLIFQKGQNPFLSECFKPVDSHEARQKIIQNPQPCVILATSGMMNGGPVMEYFKAFAEDPRNTLVFVGYQADGTIGRRIQKGWKEIPMTGKNGSTEMLKMNMEVQVVDGFSGHSDRRQLMEYVKRMQPRPERVFTEHGDEKACVDLASSVYKKLKIETRALTNLETVRLL.

Positions E4 to L71 are KHa. Residues A72 to P139 are KHb. Residues W180–A383 are metallo-beta-lactamase N-terminus. Zn(2+) contacts are provided by H242, H244, D246, H247, H329, and D352. Residues N384 to S578 are beta-Casp. A metallo-beta-lactamase C-terminus region spans residues G579–L637. Position 604 (H604) interacts with Zn(2+).

Belongs to the metallo-beta-lactamase superfamily. RNA-metabolizing metallo-beta-lactamase-like family. FttA subfamily. As to quaternary structure, homodimer. Interacts with RNA polymerase (RNAP), interacts with the Spt4-Spt5 complex. The cofactor is Zn(2+).

Functionally, terminates transcription on the whole genome. Termination is linked to FttA-mediated RNA cleavage and does not require NTP hydrolysis. Cleaves endonucleolytically at the RNA exit channel of RNA polymerase (RNAP); the 5'-3' exonuclease activity of this protein degrades the nascent RNA released from RNAP. The protein is Transcription termination factor FttA of Methanosarcina mazei (strain ATCC BAA-159 / DSM 3647 / Goe1 / Go1 / JCM 11833 / OCM 88) (Methanosarcina frisia).